Consider the following 350-residue polypeptide: Nicotinate-nucleotide--dimethylbenzimidazole phosphoribosyltransferase (350 aa).

The Proton acceptor role is filled by Glu-317.

It belongs to the CobT family.

The catalysed reaction is 5,6-dimethylbenzimidazole + nicotinate beta-D-ribonucleotide = alpha-ribazole 5'-phosphate + nicotinate + H(+). It functions in the pathway nucleoside biosynthesis; alpha-ribazole biosynthesis; alpha-ribazole from 5,6-dimethylbenzimidazole: step 1/2. Catalyzes the synthesis of alpha-ribazole-5'-phosphate from nicotinate mononucleotide (NAMN) and 5,6-dimethylbenzimidazole (DMB). This chain is Nicotinate-nucleotide--dimethylbenzimidazole phosphoribosyltransferase, found in Shewanella sp. (strain MR-4).